The sequence spans 296 residues: Lipoyl synthase (296 aa).

The [4Fe-4S] cluster site is built by Cys38, Cys43, Cys49, Cys64, Cys68, Cys71, and Ser279. The Radical SAM core domain occupies 50–268 (WDGGCLTFMV…AEYGRSLGFK (219 aa)).

Belongs to the radical SAM superfamily. Lipoyl synthase family. The cofactor is [4Fe-4S] cluster.

It localises to the cytoplasm. The catalysed reaction is [[Fe-S] cluster scaffold protein carrying a second [4Fe-4S](2+) cluster] + N(6)-octanoyl-L-lysyl-[protein] + 2 oxidized [2Fe-2S]-[ferredoxin] + 2 S-adenosyl-L-methionine + 4 H(+) = [[Fe-S] cluster scaffold protein] + N(6)-[(R)-dihydrolipoyl]-L-lysyl-[protein] + 4 Fe(3+) + 2 hydrogen sulfide + 2 5'-deoxyadenosine + 2 L-methionine + 2 reduced [2Fe-2S]-[ferredoxin]. The protein operates within protein modification; protein lipoylation via endogenous pathway; protein N(6)-(lipoyl)lysine from octanoyl-[acyl-carrier-protein]: step 2/2. Its function is as follows. Catalyzes the radical-mediated insertion of two sulfur atoms into the C-6 and C-8 positions of the octanoyl moiety bound to the lipoyl domains of lipoate-dependent enzymes, thereby converting the octanoylated domains into lipoylated derivatives. This Methanocella arvoryzae (strain DSM 22066 / NBRC 105507 / MRE50) protein is Lipoyl synthase.